A 241-amino-acid chain; its full sequence is Enterotoxin type H (241 aa).

The N-terminal stretch at 1-24 (MINKIKILFSFLALLLSFTSYAKA) is a signal peptide. Cysteine 106 and cysteine 116 are oxidised to a cystine. Zn(2+)-binding residues include aspartate 191, histidine 230, and aspartate 232.

The protein belongs to the staphylococcal/streptococcal toxin family. Interacts with host MHC class II molecules composed of alpha/HLA-DRA and beta/HLA-DRB1 chains. Interacts with host TCR alpha-chain TRAV27. Zn(2+) serves as cofactor.

The protein localises to the secreted. In terms of biological role, staphylococcal enterotoxin that activates the host immune system by binding as unprocessed molecules to major histocompatibility (MHC) complex class II and T-cell receptor (TCR) molecules via their alpha domain, in particular TRAV27. In turn, this ternary complex activates a large number of T-lymphocytes initiating a systemic release of pro-inflammatory cytokines. Also causes the intoxication staphylococcal food poisoning syndrome. The illness characterized by high fever, hypotension, diarrhea, shock, and in some cases death. The protein is Enterotoxin type H (entH) of Staphylococcus aureus.